The sequence spans 166 residues: Small ribosomal subunit protein uS5 (166 aa).

Residues Leu-11 to Val-74 enclose the S5 DRBM domain.

Belongs to the universal ribosomal protein uS5 family. Part of the 30S ribosomal subunit. Contacts proteins S4 and S8.

Functionally, with S4 and S12 plays an important role in translational accuracy. Its function is as follows. Located at the back of the 30S subunit body where it stabilizes the conformation of the head with respect to the body. This chain is Small ribosomal subunit protein uS5, found in Cronobacter sakazakii (strain ATCC BAA-894) (Enterobacter sakazakii).